Here is a 332-residue protein sequence, read N- to C-terminus: Glycerol-3-phosphate dehydrogenase [NAD(P)+] (332 aa).

4 residues coordinate NADPH: Ser10, Trp11, Lys31, and Lys105. Sn-glycerol 3-phosphate contacts are provided by Lys105, Gly136, and Ser138. An NADPH-binding site is contributed by Ala140. 5 residues coordinate sn-glycerol 3-phosphate: Lys191, Asp244, Ser254, Arg255, and Asn256. The active-site Proton acceptor is Lys191. Arg255 contributes to the NADPH binding site. NADPH is bound by residues Val279 and Glu281.

The protein belongs to the NAD-dependent glycerol-3-phosphate dehydrogenase family.

The protein resides in the cytoplasm. The catalysed reaction is sn-glycerol 3-phosphate + NAD(+) = dihydroxyacetone phosphate + NADH + H(+). It carries out the reaction sn-glycerol 3-phosphate + NADP(+) = dihydroxyacetone phosphate + NADPH + H(+). It functions in the pathway membrane lipid metabolism; glycerophospholipid metabolism. Functionally, catalyzes the reduction of the glycolytic intermediate dihydroxyacetone phosphate (DHAP) to sn-glycerol 3-phosphate (G3P), the key precursor for phospholipid synthesis. The polypeptide is Glycerol-3-phosphate dehydrogenase [NAD(P)+] (Anaeromyxobacter dehalogenans (strain 2CP-C)).